The following is a 64-amino-acid chain: Cytochrome c oxidase subunit 2 (64 aa).

Residues 1–14 (MAHPSQLGFQDAAS) lie on the Mitochondrial intermembrane side of the membrane. A helical transmembrane segment spans residues 15–45 (PMMEELLHFHDHALMVVFLISTFVLYIILTM). The Mitochondrial matrix segment spans residues 46–64 (LTTKLTDKLILESHEIEII).

The protein belongs to the cytochrome c oxidase subunit 2 family. In terms of assembly, component of the cytochrome c oxidase (complex IV, CIV), a multisubunit enzyme composed of 14 subunits. The complex is composed of a catalytic core of 3 subunits MT-CO1, MT-CO2 and MT-CO3, encoded in the mitochondrial DNA, and 11 supernumerary subunits COX4I, COX5A, COX5B, COX6A, COX6B, COX6C, COX7A, COX7B, COX7C, COX8 and NDUFA4, which are encoded in the nuclear genome. The complex exists as a monomer or a dimer and forms supercomplexes (SCs) in the inner mitochondrial membrane with NADH-ubiquinone oxidoreductase (complex I, CI) and ubiquinol-cytochrome c oxidoreductase (cytochrome b-c1 complex, complex III, CIII), resulting in different assemblies (supercomplex SCI(1)III(2)IV(1) and megacomplex MCI(2)III(2)IV(2)). Found in a complex with TMEM177, COA6, COX18, COX20, SCO1 and SCO2. Interacts with TMEM177 in a COX20-dependent manner. Interacts with COX20. Interacts with COX16. Requires Cu cation as cofactor.

The protein resides in the mitochondrion inner membrane. It carries out the reaction 4 Fe(II)-[cytochrome c] + O2 + 8 H(+)(in) = 4 Fe(III)-[cytochrome c] + 2 H2O + 4 H(+)(out). Functionally, component of the cytochrome c oxidase, the last enzyme in the mitochondrial electron transport chain which drives oxidative phosphorylation. The respiratory chain contains 3 multisubunit complexes succinate dehydrogenase (complex II, CII), ubiquinol-cytochrome c oxidoreductase (cytochrome b-c1 complex, complex III, CIII) and cytochrome c oxidase (complex IV, CIV), that cooperate to transfer electrons derived from NADH and succinate to molecular oxygen, creating an electrochemical gradient over the inner membrane that drives transmembrane transport and the ATP synthase. Cytochrome c oxidase is the component of the respiratory chain that catalyzes the reduction of oxygen to water. Electrons originating from reduced cytochrome c in the intermembrane space (IMS) are transferred via the dinuclear copper A center (CU(A)) of subunit 2 and heme A of subunit 1 to the active site in subunit 1, a binuclear center (BNC) formed by heme A3 and copper B (CU(B)). The BNC reduces molecular oxygen to 2 water molecules using 4 electrons from cytochrome c in the IMS and 4 protons from the mitochondrial matrix. This Geophagus steindachneri (Red hump earth eater) protein is Cytochrome c oxidase subunit 2 (mt-co2).